The following is a 247-amino-acid chain: L-cystine import ATP-binding protein TcyC (247 aa).

Residues 2 to 240 enclose the ABC transporter domain; the sequence is LTVKGLNKSF…PKEERTQRFL (239 aa). Residue 34 to 41 participates in ATP binding; it reads GPSGSGKT.

It belongs to the ABC transporter superfamily. L-cystine importer (TC 3.A.1.3.14) family. The complex is composed of two ATP-binding proteins (TcyC), two transmembrane proteins (TcyB) and a solute-binding protein (TcyA).

The protein localises to the cell membrane. Functionally, part of the ABC transporter complex TcyABC involved in L-cystine import. Responsible for energy coupling to the transport system. This chain is L-cystine import ATP-binding protein TcyC (tcyC), found in Bacillus subtilis (strain 168).